The sequence spans 186 residues: Prorelaxin 1 (186 aa).

The first 22 residues, 1-22, serve as a signal peptide directing secretion; the sequence is MSSRLLLQLLGFWLFLSQPCRA. Intrachain disulfides connect Cys36/Cys173, Cys48/Cys186, and Cys172/Cys177. A propeptide spans 58-158 (connecting peptide); sequence SQEEPAPLAR…LKYLGSDAQS (101 aa). The residue at position 163 (Gln163) is a Pyrrolidone carboxylic acid.

It belongs to the insulin family. As to quaternary structure, heterodimer of a B chain and an A chain linked by two disulfide bonds.

The protein resides in the secreted. Relaxin is an ovarian hormone that acts with estrogen to produce dilatation of the birth canal in many mammals. This chain is Prorelaxin 1 (Rln1), found in Rattus norvegicus (Rat).